The primary structure comprises 490 residues: Cytochrome P450 2C55 (490 aa).

Heme is bound at residue C435.

Belongs to the cytochrome P450 family. It depends on heme as a cofactor.

It localises to the endoplasmic reticulum membrane. The protein localises to the microsome membrane. The enzyme catalyses an organic molecule + reduced [NADPH--hemoprotein reductase] + O2 = an alcohol + oxidized [NADPH--hemoprotein reductase] + H2O + H(+). Its function is as follows. Metabolizes arachidonic acid mainly to 19-hydroxyeicosatetraenoic acid (HETE). The sequence is that of Cytochrome P450 2C55 (Cyp2c55) from Rattus norvegicus (Rat).